The following is a 257-amino-acid chain: Phycoerythrobilin:ferredoxin oxidoreductase (257 aa).

It belongs to the HY2 family.

It catalyses the reaction (3Z)-phycoerythrobilin + oxidized 2[4Fe-4S]-[ferredoxin] = 15,16-dihydrobiliverdin + reduced 2[4Fe-4S]-[ferredoxin] + 2 H(+). In terms of biological role, catalyzes the two-electron reduction of the C2 and C3(1) diene system of 15,16-dihydrobiliverdin. In Synechococcus sp. (strain WH8020), this protein is Phycoerythrobilin:ferredoxin oxidoreductase (pebB).